Here is an 838-residue protein sequence, read N- to C-terminus: Ribonuclease Z (838 aa).

Residue Ser-824 is modified to Phosphoserine.

Belongs to the RNase Z family. In terms of assembly, homodimer. Zn(2+) serves as cofactor.

The protein localises to the cytoplasm. It localises to the nucleus. The catalysed reaction is Endonucleolytic cleavage of RNA, removing extra 3' nucleotides from tRNA precursor, generating 3' termini of tRNAs. A 3'-hydroxy group is left at the tRNA terminus and a 5'-phosphoryl group is left at the trailer molecule.. Zinc phosphodiesterase, which displays some tRNA 3'-processing endonuclease activity. Probably involved in tRNA maturation, by removing a 3'-trailer from precursor tRNA. In Saccharomyces cerevisiae (strain ATCC 204508 / S288c) (Baker's yeast), this protein is Ribonuclease Z (TRZ1).